The following is a 554-amino-acid chain: Zinc finger protein syd-9 (554 aa).

3 C2H2-type zinc fingers span residues 20-43, 65-87, and 93-116; these read LTCPQCPKSFSSTKLLQQHQQMFH, FICETCGKAFRFRSNLAEHRSVH, and YVCKFCGKSSRLKGNLTKHILKHH. Disordered stretches follow at residues 136–158, 298–319, and 342–383; these read KIVTKDNGPTTNGSTPTTSTATP, SPDTVQSDHSDDFEQDSPPPMA, and ASGQ…CPSP. Over residues 142 to 158 the composition is skewed to low complexity; it reads NGPTTNGSTPTTSTATP. 2 stretches are compositionally biased toward polar residues: residues 351–360 and 370–379; these read PDSTDTQKGC and SDPSTSSGDS. Residues 387–410 form a C2H2-type 4 zinc finger; sequence LHCKECGTLVRKSSHLPIHMTMSH. Positions 516–554 are disordered; the sequence is RMEMSLSPIKPFQQRFSRERSSSSSVERSPSRERSRSPL. Basic and acidic residues predominate over residues 544 to 554; sequence SPSRERSRSPL.

Expressed mainly in body wall muscles and ventral cord motoneurons.

It is found in the nucleus. It localises to the nucleus speckle. In terms of biological role, plays a role in regulating synaptic function, probably by modulation of endocytosis. May be dispensable in muscle for normal locomotion. May be involved in post-transcriptional mRNA processing, in parallel with unc-75. The polypeptide is Zinc finger protein syd-9 (Caenorhabditis elegans).